The primary structure comprises 81 residues: ATP synthase subunit c, chloroplastic (81 aa).

A run of 2 helical transmembrane segments spans residues 7–27 and 57–77; these read AASVIAAGLAVGLASIGPGVG and LAFMEALTIYGLVVALALLFA.

The protein belongs to the ATPase C chain family. As to quaternary structure, F-type ATPases have 2 components, F(1) - the catalytic core - and F(0) - the membrane proton channel. F(1) has five subunits: alpha(3), beta(3), gamma(1), delta(1), epsilon(1). F(0) has four main subunits: a(1), b(1), b'(1) and c(10-14). The alpha and beta chains form an alternating ring which encloses part of the gamma chain. F(1) is attached to F(0) by a central stalk formed by the gamma and epsilon chains, while a peripheral stalk is formed by the delta, b and b' chains.

The protein resides in the plastid. Its subcellular location is the chloroplast thylakoid membrane. In terms of biological role, f(1)F(0) ATP synthase produces ATP from ADP in the presence of a proton or sodium gradient. F-type ATPases consist of two structural domains, F(1) containing the extramembraneous catalytic core and F(0) containing the membrane proton channel, linked together by a central stalk and a peripheral stalk. During catalysis, ATP synthesis in the catalytic domain of F(1) is coupled via a rotary mechanism of the central stalk subunits to proton translocation. Functionally, key component of the F(0) channel; it plays a direct role in translocation across the membrane. A homomeric c-ring of between 10-14 subunits forms the central stalk rotor element with the F(1) delta and epsilon subunits. The chain is ATP synthase subunit c, chloroplastic from Arabis hirsuta (Hairy rock-cress).